The primary structure comprises 161 residues: Allophycocyanin alpha chain (161 aa).

N4-methylasparagine is present on Asn71. Cys81 is a (2R,3E)-phycocyanobilin binding site.

The protein belongs to the phycobiliprotein family. Heterodimer of an alpha and a beta chain. Post-translationally, contains one covalently linked phycocyanobilin chromophore.

It localises to the plastid. The protein resides in the cyanelle thylakoid membrane. Functionally, light-harvesting photosynthetic bile pigment-protein from the phycobiliprotein complex. Allophycocyanin has a maximum absorption at approximately 650 nanometers. The protein is Allophycocyanin alpha chain (apcA) of Cyanophora paradoxa.